Consider the following 418-residue polypeptide: Voltage-gated ClC-type chloride channel ClcB (418 aa).

Residue Met1 is a topological domain, cytoplasmic. The helical transmembrane segment at 2–22 (FHRLLIATVVGILAAFAVAGF) threads the bilayer. Residues 23-53 (RHAMLLLEWLFLNNDSGSLVNAATNLSPWRR) are Periplasmic-facing. Residues 54-74 (LLTPALGGLAAGLLLMGWQKF) form a helical membrane-spanning segment. Over 75-145 (TQQRPHAPTD…QRFTPRQEWK (71 aa)) the chain is Cytoplasmic. Residues 146 to 166 (LWIACGAAAGMAAAYRAPLAG) form a helical membrane-spanning segment. Residues 167–177 (SLFIAEVLFGT) lie on the Periplasmic side of the membrane. Residues 178–200 (MMLASLGPVIISAVVALLVSNLI) form a helical membrane-spanning segment. The Cytoplasmic portion of the chain corresponds to 201–221 (NHSDALLYNVQLSVTVQARDY). The helical transmembrane segment at 222–242 (ALIISTGVLAGLCGPLLLTLM) threads the bilayer. Residues 243–257 (NACHRGFVSLKLAPP) lie on the Periplasmic side of the membrane. The helical transmembrane segment at 258 to 278 (WQLALGGLIVGLLSLFTPAVW) threads the bilayer. At 279–290 (GNGYSTVQSFLT) the chain is on the cytoplasmic side. The chain crosses the membrane as a helical span at residues 291 to 311 (APPLLMIIAGIFLCKLCAVLA). Residues 312 to 315 (SSGS) lie on the Periplasmic side of the membrane. Residues 316-336 (GAPGGVFTPTLFIGLAIGMLY) form a helical membrane-spanning segment. Residues 337–351 (GRSLGLWFPDGEEIT) lie on the Cytoplasmic side of the membrane. A helical membrane pass occupies residues 352–372 (LLLGLTGMATLLAATTHAPIM). Topologically, residues 373–379 (STLMICE) are periplasmic. A helical membrane pass occupies residues 380 to 400 (MTGEYQLLPGLLIACVIASVI). Over 401–418 (SRTLHRDSIYRQHTAQHS) the chain is Cytoplasmic.

This sequence belongs to the chloride channel (TC 2.A.49) family. ClcB subfamily.

Its subcellular location is the cell inner membrane. Probably acts as an electrical shunt for an outwardly-directed proton pump that is linked to amino acid decarboxylation, as part of the extreme acid resistance (XAR) response. The sequence is that of Voltage-gated ClC-type chloride channel ClcB (clcB) from Escherichia coli (strain K12).